The chain runs to 307 residues: Probable GTP 3',8-cyclase (307 aa).

Residues Arg5–Pro231 enclose the Radical SAM core domain. A GTP-binding site is contributed by Arg14. Residues Cys21, Cys25, and Cys28 each contribute to the [4Fe-4S] cluster site. Lys62 contacts GTP. Gly66 is an S-adenosyl-L-methionine binding site. A GTP-binding site is contributed by Thr91. Ser115 is a binding site for S-adenosyl-L-methionine. GTP is bound at residue Lys151. Met190 serves as a coordination point for S-adenosyl-L-methionine. Residues Cys251 and Cys254 each contribute to the [4Fe-4S] cluster site. Residue Arg256–Arg258 coordinates GTP. Residue Cys268 participates in [4Fe-4S] cluster binding.

The protein belongs to the radical SAM superfamily. MoaA family. [4Fe-4S] cluster serves as cofactor.

It carries out the reaction GTP + AH2 + S-adenosyl-L-methionine = (8S)-3',8-cyclo-7,8-dihydroguanosine 5'-triphosphate + 5'-deoxyadenosine + L-methionine + A + H(+). Its pathway is cofactor biosynthesis; molybdopterin biosynthesis. In terms of biological role, catalyzes the cyclization of GTP to (8S)-3',8-cyclo-7,8-dihydroguanosine 5'-triphosphate. The chain is Probable GTP 3',8-cyclase from Thermococcus kodakarensis (strain ATCC BAA-918 / JCM 12380 / KOD1) (Pyrococcus kodakaraensis (strain KOD1)).